Reading from the N-terminus, the 353-residue chain is Rhodopsin (353 aa).

The Extracellular segment spans residues Met1 to Ala36. Residues Asn2 and Asn15 are each glycosylated (N-linked (GlcNAc...) asparagine). A helical membrane pass occupies residues Tyr37–Val61. At Thr62–Asn73 the chain is on the cytoplasmic side. The helical transmembrane segment at Tyr74–Tyr96 threads the bilayer. Over Thr97–Cys110 the chain is Extracellular. An intrachain disulfide couples Cys110 to Cys187. The chain crosses the membrane as a helical span at residues Asn111–Val133. The short motif at Glu134–Trp136 is the 'Ionic lock' involved in activated form stabilization element. Over Glu134–His152 the chain is Cytoplasmic. The helical transmembrane segment at Ala153–Val173 threads the bilayer. Topologically, residues Gly174–Ser202 are extracellular. Residue Asn200 is glycosylated (N-linked (GlcNAc...) asparagine). A helical membrane pass occupies residues Phe203–Gly224. At Arg225–Arg252 the chain is on the cytoplasmic side. A helical membrane pass occupies residues Met253–Tyr274. The Extracellular segment spans residues Ile275 to Leu286. A helical membrane pass occupies residues Phe287 to Cys308. The residue at position 296 (Lys296) is an N6-(retinylidene)lysine. Residues Met309–Ala353 are Cytoplasmic-facing. 2 S-palmitoyl cysteine lipidation sites follow: Cys322 and Cys323. The interval Glu329–Ala353 is disordered. The span at Ala334–Ala353 shows a compositional bias: low complexity.

This sequence belongs to the G-protein coupled receptor 1 family. Opsin subfamily. Post-translationally, phosphorylated on some or all of the serine and threonine residues present in the C-terminal region. In terms of processing, contains one covalently linked retinal chromophore.

The protein localises to the membrane. Its subcellular location is the cell projection. It localises to the cilium. The protein resides in the photoreceptor outer segment. Its function is as follows. Photoreceptor required for image-forming vision at low light intensity. While most salt water fish species use retinal as chromophore, most freshwater fish use 3-dehydroretinal, or a mixture of retinal and 3-dehydroretinal. Light-induced isomerization of 11-cis to all-trans retinal triggers a conformational change that activates signaling via G-proteins. Subsequent receptor phosphorylation mediates displacement of the bound G-protein alpha subunit by arrestin and terminates signaling. This is Rhodopsin (rho) from Chelon auratus (Golden grey mullet).